A 303-amino-acid polypeptide reads, in one-letter code: N-acetyl-D-glucosamine kinase (303 aa).

ATP-binding positions include 4 to 11 (GFDIGGTK) and 133 to 140 (GVGGGLVL). Residues His-157, Cys-177, Cys-179, and Cys-184 each contribute to the Zn(2+) site.

This sequence belongs to the ROK (NagC/XylR) family. NagK subfamily.

It catalyses the reaction N-acetyl-D-glucosamine + ATP = N-acetyl-D-glucosamine 6-phosphate + ADP + H(+). It participates in cell wall biogenesis; peptidoglycan recycling. Its function is as follows. Catalyzes the phosphorylation of N-acetyl-D-glucosamine (GlcNAc) derived from cell-wall degradation, yielding GlcNAc-6-P. In Salmonella dublin (strain CT_02021853), this protein is N-acetyl-D-glucosamine kinase.